A 230-amino-acid polypeptide reads, in one-letter code: Uracil-DNA glycosylase (230 aa).

The active-site Proton acceptor is aspartate 70.

This sequence belongs to the uracil-DNA glycosylase (UDG) superfamily. UNG family.

Its subcellular location is the cytoplasm. The enzyme catalyses Hydrolyzes single-stranded DNA or mismatched double-stranded DNA and polynucleotides, releasing free uracil.. In terms of biological role, excises uracil residues from the DNA which can arise as a result of misincorporation of dUMP residues by DNA polymerase or due to deamination of cytosine. In Pseudomonas savastanoi pv. phaseolicola (strain 1448A / Race 6) (Pseudomonas syringae pv. phaseolicola (strain 1448A / Race 6)), this protein is Uracil-DNA glycosylase.